The following is a 229-amino-acid chain: Nectarin-1 (229 aa).

A signal peptide spans 1–32 (MAAFGINSKIFQSMEMAILFLLAISIDRYCFA). Cysteines 42 and 57 form a disulfide. Residue Asn60 is glycosylated (N-linked (GlcNAc...) asparagine). The region spanning 69–217 (LAISKPGATN…TFQINTEDVQ (149 aa)) is the Cupin type-1 domain. Mn(2+) is bound by residues His117, His119, Glu124, and His163.

Monomer. In the absence of manganese, it forms tetrameric and pentameric forms which show superoxide dismutase activity. It depends on Mn(2+) as a cofactor. In terms of tissue distribution, nectary tissues and to a lower level ovary. Not detected in petals, stems, leaves, roots or other floral tissues.

The protein localises to the secreted. The protein resides in the extracellular space. Its subcellular location is the apoplast. It catalyses the reaction 2 superoxide + 2 H(+) = H2O2 + O2. Functionally, may interact with bacterial adhesins thereby protecting the reproductive tissues from microbial attack. Has no oxalate oxidase activity. The polypeptide is Nectarin-1 (NECI) (Nicotiana langsdorffii x Nicotiana sanderae (Ornamental tobacco)).